Consider the following 220-residue polypeptide: NADH-quinone oxidoreductase subunit I (220 aa).

2 4Fe-4S ferredoxin-type domains span residues 71 to 102 and 112 to 141; these read LQRL…IITH and DSYT…MGNR. Positions 82, 85, 88, 92, 121, 124, 127, and 131 each coordinate [4Fe-4S] cluster. The tract at residues 187-220 is disordered; the sequence is MQATPLDYVQEPSKEESKEETPTNPESNKGDENV. The segment covering 198 to 207 has biased composition (basic and acidic residues); the sequence is PSKEESKEET.

This sequence belongs to the complex I 23 kDa subunit family. NDH-1 is composed of 14 different subunits. Subunits NuoA, H, J, K, L, M, N constitute the membrane sector of the complex. [4Fe-4S] cluster is required as a cofactor.

It is found in the cell inner membrane. The enzyme catalyses a quinone + NADH + 5 H(+)(in) = a quinol + NAD(+) + 4 H(+)(out). Functionally, NDH-1 shuttles electrons from NADH, via FMN and iron-sulfur (Fe-S) centers, to quinones in the respiratory chain. The immediate electron acceptor for the enzyme in this species is believed to be ubiquinone. Couples the redox reaction to proton translocation (for every two electrons transferred, four hydrogen ions are translocated across the cytoplasmic membrane), and thus conserves the redox energy in a proton gradient. This chain is NADH-quinone oxidoreductase subunit I, found in Helicobacter pylori (strain HPAG1).